We begin with the raw amino-acid sequence, 352 residues long: Nodal homolog 4-B (352 aa).

Residues methionine 1–serine 18 form the signal peptide. The propeptide occupies leucine 19–arginine 278. Asparagine 30, asparagine 37, asparagine 199, and asparagine 238 each carry an N-linked (GlcNAc...) asparagine glycan. The disordered stretch occupies residues glycine 197–glutamine 223.

Belongs to the TGF-beta family. In terms of assembly, homodimer; disulfide-linked.

Its subcellular location is the secreted. Functionally, cooperation and regulatory loops of multiple nodals are essential for mesendoderm patterning in early embryos. Plays a role in mesoderm formation and may be required for neural development. In Xenopus laevis (African clawed frog), this protein is Nodal homolog 4-B (nodal4-b).